The primary structure comprises 177 residues: Nucleoside-triphosphatase THEP1 (177 aa).

Residues 10 to 17 (GKPGIGKT) and 101 to 108 (CLVIDEIG) contribute to the ATP site.

This sequence belongs to the THEP1 NTPase family.

The enzyme catalyses a ribonucleoside 5'-triphosphate + H2O = a ribonucleoside 5'-diphosphate + phosphate + H(+). In terms of biological role, has nucleotide phosphatase activity towards ATP, GTP, CTP, TTP and UTP. May hydrolyze nucleoside diphosphates with lower efficiency. The polypeptide is Nucleoside-triphosphatase THEP1 (Natranaerobius thermophilus (strain ATCC BAA-1301 / DSM 18059 / JW/NM-WN-LF)).